The following is a 797-amino-acid chain: Probable exo-1,4-beta-xylosidase xlnD (797 aa).

Positions 1-20 (MPGAASIVAVLAALLPTALG) are cleaved as a signal peptide. 4 N-linked (GlcNAc...) asparagine glycosylation sites follow: N23, N87, N142, and N237. D310 is a catalytic residue. N-linked (GlcNAc...) asparagine glycosylation is found at N326, N391, N404, N442, N479, N521, N617, N644, N657, N684, and N706.

This sequence belongs to the glycosyl hydrolase 3 family.

It localises to the secreted. The catalysed reaction is Hydrolysis of (1-&gt;4)-beta-D-xylans, to remove successive D-xylose residues from the non-reducing termini.. The protein operates within glycan degradation; xylan degradation. Xylan 1,4-beta-xylosidase involved in the hydrolysis of xylan, a major structural heterogeneous polysaccharide found in plant biomass representing the second most abundant polysaccharide in the biosphere, after cellulose. In Aspergillus flavus (strain ATCC 200026 / FGSC A1120 / IAM 13836 / NRRL 3357 / JCM 12722 / SRRC 167), this protein is Probable exo-1,4-beta-xylosidase xlnD (xlnD).